The chain runs to 302 residues: Bacteriochlorophyll synthase 33 kDa chain (302 aa).

The next 9 membrane-spanning stretches (helical) occupy residues 25–45 (ITWF…GIWP), 49–69 (WPLV…MSQA), 97–117 (WGLY…WMLG), 119–139 (WGFG…VEPI), 145–165 (GWWG…FTGA), 166–186 (AVLS…LYAF), 223–243 (LACT…VIWG), 246–266 (IHAG…RVLL), and 275–295 (WYNG…AFAI).

Its subcellular location is the cell membrane. It functions in the pathway porphyrin-containing compound metabolism; bacteriochlorophyll biosynthesis (light-independent). Catalyzes the esterification of bacteriochlorophyllide a by geranylgeraniol-PPi. This chain is Bacteriochlorophyll synthase 33 kDa chain (bchG), found in Cereibacter sphaeroides (strain ATCC 17023 / DSM 158 / JCM 6121 / CCUG 31486 / LMG 2827 / NBRC 12203 / NCIMB 8253 / ATH 2.4.1.) (Rhodobacter sphaeroides).